We begin with the raw amino-acid sequence, 969 residues long: UvrABC system protein A (969 aa).

32–39 contributes to the ATP binding site; that stretch reads GLSGSGKS. A C4-type zinc finger spans residues 258–286; it reads CPNGHPLAVDDLEPRSFSFNSPYGACPEC. ABC transporter domains are found at residues 316 to 599 and 619 to 948; these read WSAG…KDSI and VDRK…KFLA. 652 to 659 contacts ATP; sequence GVSGSGKS. Residues 751–777 form a C4-type zinc finger; that stretch reads CEACTGDGTIKIEMNFLPDVYVPCEVC.

The protein belongs to the ABC transporter superfamily. UvrA family. In terms of assembly, forms a heterotetramer with UvrB during the search for lesions.

It localises to the cytoplasm. Functionally, the UvrABC repair system catalyzes the recognition and processing of DNA lesions. UvrA is an ATPase and a DNA-binding protein. A damage recognition complex composed of 2 UvrA and 2 UvrB subunits scans DNA for abnormalities. When the presence of a lesion has been verified by UvrB, the UvrA molecules dissociate. The sequence is that of UvrABC system protein A from Mycobacterium leprae (strain TN).